The following is a 273-amino-acid chain: Pantothenate synthetase (273 aa).

27–34 provides a ligand contact to ATP; sequence MGALHAGH. The active-site Proton donor is the His-34. A (R)-pantoate-binding site is contributed by Gln-58. Gln-58 contributes to the beta-alanine binding site. Residue 144–147 coordinates ATP; the sequence is GKKD. Gln-150 provides a ligand contact to (R)-pantoate. ATP-binding positions include Val-173 and 181-184; that span reads LSSR.

Belongs to the pantothenate synthetase family. As to quaternary structure, homodimer.

Its subcellular location is the cytoplasm. It carries out the reaction (R)-pantoate + beta-alanine + ATP = (R)-pantothenate + AMP + diphosphate + H(+). It functions in the pathway cofactor biosynthesis; (R)-pantothenate biosynthesis; (R)-pantothenate from (R)-pantoate and beta-alanine: step 1/1. Its function is as follows. Catalyzes the condensation of pantoate with beta-alanine in an ATP-dependent reaction via a pantoyl-adenylate intermediate. The sequence is that of Pantothenate synthetase from Campylobacter hominis (strain ATCC BAA-381 / DSM 21671 / CCUG 45161 / LMG 19568 / NCTC 13146 / CH001A).